Consider the following 319-residue polypeptide: MKPENKSPVLDLISAGMKTVVNTLQPDLPPWPATGTIAEQRQYYTLERRFWNAGAPEMATRAYMVPTKYGQVETRLFCPQPDSPATLFYLHGGGFILGNLDTHDRIMRVLASYSQCTVIGIDYTLSPEARFPQAIEEIVAACCYFHQQAEDYQINMSRIGFAGDSAGAMLALASALWLRDKQIDCGKIAGVLLWYGLYGLRDSVTRRLLGGVWDGLTQQDLQMYEEAYLSNDADRESPYYCLFNNDLTREVPPCFIAGAEFDPLLDDSRLLYQTLAAHQQPCEFKLYPGTLHAFLHYSRMMKTADEALRDGAQFFTAQL.

Residues 91–93 (HGG) carry the Involved in the stabilization of the negatively charged intermediate by the formation of the oxyanion hole motif. Residues Ser-165, Asp-262, and His-292 contribute to the active site.

It belongs to the 'GDXG' lipolytic enzyme family. Homodimer. Interacts with MalT and MelA.

It is found in the cytoplasm. In terms of biological role, displays esterase activity towards short chain fatty esters (acyl chain length of up to 8 carbons). Able to hydrolyze triacetylglycerol (triacetin) and tributyrylglycerol (tributyrin), but not trioleylglycerol (triolein) or cholesterol oleate. Negatively regulates MalT activity by antagonizing maltotriose binding. Inhibits MelA galactosidase activity. The polypeptide is Acetyl esterase (Escherichia coli (strain ATCC 8739 / DSM 1576 / NBRC 3972 / NCIMB 8545 / WDCM 00012 / Crooks)).